A 91-amino-acid polypeptide reads, in one-letter code: Putative regulatory protein CLB_2388 (91 aa).

This sequence belongs to the RemA family.

In Clostridium botulinum (strain ATCC 19397 / Type A), this protein is Putative regulatory protein CLB_2388.